We begin with the raw amino-acid sequence, 293 residues long: LysM and putative peptidoglycan-binding domain-containing protein 4 (293 aa).

At 1 to 214 (MRQKEVLAKS…VADGADCGIQ (214 aa)) the chain is on the extracellular side. Residues 28-65 (FNNGSGDSGDSSEEESHQVVLRPRGKEHQKNSSQRPGA) form a disordered region. N-linked (GlcNAc...) asparagine glycosylation occurs at Asn-30. The 45-residue stretch at 71-115 (LQRELAQEDSLNKLALQYGCKVADIKKANNFIREQDLYALKSIKI) folds into the LysM domain. A helical transmembrane segment spans residues 215 to 235 (WWNAVFLMLLIGIVLPVFYLV). Residues 236–293 (YFKIQATGEPSNGLNATVVPNGSMTLSPVPGQAPRLAIPVPTLPASDSQVSPTTQAGA) lie on the Cytoplasmic side of the membrane.

It is found in the membrane. The protein is LysM and putative peptidoglycan-binding domain-containing protein 4 (Lysmd4) of Mus musculus (Mouse).